The following is a 479-amino-acid chain: Probable cytosol aminopeptidase (479 aa).

Mn(2+) contacts are provided by lysine 247 and aspartate 252. Residue lysine 259 is part of the active site. Positions 270, 329, and 331 each coordinate Mn(2+). Arginine 333 is an active-site residue.

It belongs to the peptidase M17 family. The cofactor is Mn(2+).

The protein resides in the cytoplasm. The enzyme catalyses Release of an N-terminal amino acid, Xaa-|-Yaa-, in which Xaa is preferably Leu, but may be other amino acids including Pro although not Arg or Lys, and Yaa may be Pro. Amino acid amides and methyl esters are also readily hydrolyzed, but rates on arylamides are exceedingly low.. It carries out the reaction Release of an N-terminal amino acid, preferentially leucine, but not glutamic or aspartic acids.. Functionally, presumably involved in the processing and regular turnover of intracellular proteins. Catalyzes the removal of unsubstituted N-terminal amino acids from various peptides. The polypeptide is Probable cytosol aminopeptidase (Vesicomyosocius okutanii subsp. Calyptogena okutanii (strain HA)).